Here is a 318-residue protein sequence, read N- to C-terminus: Transcription factor zip-4 (318 aa).

Residues 1 to 13 (MYNYNYSRGNKSM) show a composition bias toward polar residues. Disordered stretches follow at residues 1 to 20 (MYNY…PRFH), 147 to 205 (EKKP…TAAA), 238 to 257 (NNDA…LQKD), and 273 to 318 (ELQS…KSNY). Positions 173-190 (DYQEEGETSLSDNDESVD) are enriched in acidic residues. Residues 228 to 291 (EPIYKLKRAR…ERDQQLIKQL (64 aa)) enclose the bZIP domain. The segment at 232-266 (KLKRARNNDAVRKSRNKAKELQLQKDEEYDEMKKR) is basic motif. Positions 242–280 (VRKSRNKAKELQLQKDEEYDEMKKRITQLEAELQSEREG) form a coiled coil. Residues 267 to 274 (ITQLEAEL) are leucine-zipper. Basic and acidic residues predominate over residues 275–298 (QSEREGRERDQQLIKQLIREKEST). The span at 307–318 (RNALESFNKSNY) shows a compositional bias: polar residues.

It belongs to the bZIP family. C/EBP subfamily.

The protein resides in the nucleus. In terms of biological role, transcription factor that binds to the promoter and the enhancer regions of target genes. Involved in responding to mitochondrial damage. Has a protective role in response to infection by the Gram-negative bacterium P.aeruginosa. The chain is Transcription factor zip-4 from Caenorhabditis elegans.